The following is a 197-amino-acid chain: Negative modulator of initiation of replication (197 aa).

Interaction with DNA regions lie at residues 100-101 (AV), 129-133 (RTRVY), and 163-169 (NTNSGRK).

Belongs to the SeqA family. In terms of assembly, homodimer. Polymerizes to form helical filaments.

It localises to the cytoplasm. In terms of biological role, negative regulator of replication initiation, which contributes to regulation of DNA replication and ensures that replication initiation occurs exactly once per chromosome per cell cycle. Binds to pairs of hemimethylated GATC sequences in the oriC region, thus preventing assembly of replication proteins and re-initiation at newly replicated origins. Repression is relieved when the region becomes fully methylated. This is Negative modulator of initiation of replication from Haemophilus influenzae (strain ATCC 51907 / DSM 11121 / KW20 / Rd).